A 960-amino-acid chain; its full sequence is RNA polymerase II subunit A C-terminal domain phosphatase (960 aa).

N-acetylmethionine is present on Met-1. An FCP1 homology domain is found at 178 to 341 (HRNRKLVLMV…PPAARETQAR (164 aa)). The disordered stretch occupies residues 331–580 (APPAARETQA…EEDTDDDDHL (250 aa)). Positions 439 to 448 (PGVQPTQGDA) are enriched in polar residues. Residues 453–463 (LDFDLSSDSES) are compositionally biased toward acidic residues. Ser-530 carries the phosphoserine modification. Over residues 547–556 (ESQNSEQSGV) the composition is skewed to polar residues. Over residues 566–578 (VGEEEEEDTDDDD) the composition is skewed to acidic residues. The 100-residue stretch at 619–718 (LKSKVLADVA…DKVEEQLFPL (100 aa)) folds into the BRCT domain. Phosphoserine is present on residues Ser-664 and Ser-730. The residue at position 770 (Lys-770) is an N6-acetyllysine. Disordered stretches follow at residues 770–834 (KLIR…MSEA) and 854–948 (DILG…ADEM). Ser-830, Ser-860, and Ser-863 each carry phosphoserine. Over residues 854 to 864 (DILGEGSDDSD) the composition is skewed to acidic residues. Residues 865–881 (IEKKKPEDQDNEQERAP) show a composition bias toward basic and acidic residues. Over residues 934-947 (SNDDEEGSSSEADE) the composition is skewed to acidic residues.

Homodimer. Interacts with GTF2F1. Interacts with WDR77, SNRPB and SNRNP70. Phosphorylated. In the presence of TFIIF, the phosphorylated form has an increased CTD phosphatase activity. The phosphorylation is required for the physical interaction with GTF2F1.

It localises to the nucleus. Its subcellular location is the cytoplasm. The protein resides in the cytoskeleton. The protein localises to the microtubule organizing center. It is found in the centrosome. It localises to the spindle. Its subcellular location is the spindle pole. The protein resides in the midbody. The catalysed reaction is O-phospho-L-seryl-[protein] + H2O = L-seryl-[protein] + phosphate. The enzyme catalyses O-phospho-L-threonyl-[protein] + H2O = L-threonyl-[protein] + phosphate. Processively dephosphorylates 'Ser-2' and 'Ser-5' of the heptad repeats YSPTSPS in the C-terminal domain of the largest RNA polymerase II subunit. This promotes the activity of RNA polymerase II. Plays a role in the exit from mitosis by dephosphorylating crucial mitotic substrates (USP44, CDC20 and WEE1) that are required for M-phase-promoting factor (MPF)/CDK1 inactivation. This is RNA polymerase II subunit A C-terminal domain phosphatase (Ctdp1) from Mus musculus (Mouse).